The primary structure comprises 127 residues: Aspartate 1-decarboxylase (127 aa).

The Schiff-base intermediate with substrate; via pyruvic acid role is filled by Ser25. Position 25 is a pyruvic acid (Ser) (Ser25). Thr57 serves as a coordination point for substrate. The Proton donor role is filled by Tyr58. Residue 73–75 coordinates substrate; the sequence is GAA.

The protein belongs to the PanD family. In terms of assembly, heterooctamer of four alpha and four beta subunits. It depends on pyruvate as a cofactor. Post-translationally, is synthesized initially as an inactive proenzyme, which is activated by self-cleavage at a specific serine bond to produce a beta-subunit with a hydroxyl group at its C-terminus and an alpha-subunit with a pyruvoyl group at its N-terminus.

It is found in the cytoplasm. The catalysed reaction is L-aspartate + H(+) = beta-alanine + CO2. It functions in the pathway cofactor biosynthesis; (R)-pantothenate biosynthesis; beta-alanine from L-aspartate: step 1/1. Functionally, catalyzes the pyruvoyl-dependent decarboxylation of aspartate to produce beta-alanine. The chain is Aspartate 1-decarboxylase from Staphylococcus carnosus (strain TM300).